An 83-amino-acid polypeptide reads, in one-letter code: Cardiotoxin 7a (83 aa).

An N-terminal signal peptide occupies residues 1 to 21 (MKTLLLTLVVVTIVCLDLGYT). 4 disulfide bridges follow: Cys-24–Cys-43, Cys-36–Cys-61, Cys-65–Cys-76, and Cys-77–Cys-82.

The protein belongs to the three-finger toxin family. Short-chain subfamily. Orphan group XV sub-subfamily. As to expression, expressed by the venom gland.

The protein resides in the secreted. The protein localises to the target cell membrane. In terms of biological role, has low cytotoxic activity. The chain is Cardiotoxin 7a from Naja atra (Chinese cobra).